The following is a 199-amino-acid chain: Probable GTP-binding protein EngB (199 aa).

The EngB-type G domain maps to 24 to 197 (EGYEVIFAGR…GARLNTFFGY (174 aa)). GTP contacts are provided by residues 32 to 39 (GRSNAGKS), 59 to 63 (GKTQH), 77 to 80 (DLPG), 144 to 147 (TKSD), and 176 to 178 (FSS). 2 residues coordinate Mg(2+): serine 39 and threonine 61.

The protein belongs to the TRAFAC class TrmE-Era-EngA-EngB-Septin-like GTPase superfamily. EngB GTPase family. Mg(2+) serves as cofactor.

Necessary for normal cell division and for the maintenance of normal septation. In Ruthia magnifica subsp. Calyptogena magnifica, this protein is Probable GTP-binding protein EngB.